Consider the following 1039-residue polypeptide: FERM domain-containing protein 4A (1039 aa).

The region spanning 20 to 322 (RRCQVHLLDD…SQHQFYLDRK (303 aa)) is the FERM domain. The tract at residues 358-420 (KGKIISGSSG…KLCLREAELT (63 aa)) is necessary for interaction with CYTH1. Residues 366 to 382 (SGSLLSSGSQESDSSQS) are compositionally biased toward low complexity. A disordered region spans residues 366–386 (SGSLLSSGSQESDSSQSAKKD). Residues 382–416 (SAKKDMLAALKSRQEALEETLRQRLEELKKLCLRE) are a coiled coil. The residue at position 530 (serine 530) is a Phosphoserine. A disordered region spans residues 553–680 (DEDSQVTSTI…MPSTPDLRVR (128 aa)). The segment covering 571–586 (GLPPRPPSHNRPPPPQ) has biased composition (pro residues). Residues 579 to 939 (HNRPPPPQSL…QWYQRSTASH (361 aa)) are necessary for tight junction and adherens junction localization; Requires for interaction with PARD3. Phosphoserine occurs at positions 604 and 615. Residues 623 to 638 (VKKRSSHSHSSSHKRF) are compositionally biased toward basic residues. 2 positions are modified to phosphoserine: serine 681 and serine 711. Disordered regions lie at residues 713 to 756 (ESQG…HSSS) and 772 to 813 (AEDS…AGGA). A compositionally biased stretch (low complexity) spans 788–800 (RAAGALGSASSGS). Residues serine 800, serine 872, and serine 901 each carry the phosphoserine modification. Disordered stretches follow at residues 879-968 (FKES…STFV) and 980-1039 (CKAT…STDE). The span at 896–905 (LTPSRSQILR) shows a compositional bias: polar residues. Basic and acidic residues predominate over residues 912–929 (EGAHDKGAGRAAVSDELR). A compositionally biased stretch (low complexity) spans 946-966 (SHTSSTSSDSGSQYSTSSQST). Polar residues-rich tracts occupy residues 986–1000 (ALPQSQRSSTPSSEI) and 1013–1023 (TWQTGEATENS).

As to quaternary structure, interacts (via coiled-coil domain) with CYTH1 (via coiled-coil domain). Interacts with PARD3 (via coiled-coil domain). Found in a complex with PARD3, CYTH1 and FRMD4A. Interacts with CYTH2. Interacts with CYTH3.

The protein localises to the cytoplasm. Its subcellular location is the cytoskeleton. The protein resides in the cell junction. It localises to the adherens junction. It is found in the tight junction. Scaffolding protein that regulates epithelial cell polarity by connecting ARF6 activation with the PAR3 complex. Plays a redundant role with FRMD4B in epithelial polarization. May regulate MAPT secretion by activating ARF6-signaling. This is FERM domain-containing protein 4A from Homo sapiens (Human).